We begin with the raw amino-acid sequence, 360 residues long: Phospho-N-acetylmuramoyl-pentapeptide-transferase (360 aa).

10 consecutive transmembrane segments (helical) span residues 25–45, 73–93, 97–117, 132–152, 168–188, 199–219, 236–256, 263–283, 288–308, and 339–359; these read RAILGVLTALGLSMVLGPWVI, TMGGTLILFSIVTATLLWADL, YVLAVLFVTITFGLIGWVDDY, WKYFWQSACGFIVAIALFVTA, VAWQMGVLYVFVTYLMIVGFS, GLAIMPTVMVGSALGVIAYLV, SGELVVYCAALAGAGLGFLWF, VFMGDVGALALGAALGVIAVI, IVFFIMSGIFVMETVSVILQV, and IVRFWIITVILVLFGLATLKI.

Belongs to the glycosyltransferase 4 family. MraY subfamily. Requires Mg(2+) as cofactor.

Its subcellular location is the cell inner membrane. The catalysed reaction is UDP-N-acetyl-alpha-D-muramoyl-L-alanyl-gamma-D-glutamyl-meso-2,6-diaminopimeloyl-D-alanyl-D-alanine + di-trans,octa-cis-undecaprenyl phosphate = di-trans,octa-cis-undecaprenyl diphospho-N-acetyl-alpha-D-muramoyl-L-alanyl-D-glutamyl-meso-2,6-diaminopimeloyl-D-alanyl-D-alanine + UMP. The protein operates within cell wall biogenesis; peptidoglycan biosynthesis. Its function is as follows. Catalyzes the initial step of the lipid cycle reactions in the biosynthesis of the cell wall peptidoglycan: transfers peptidoglycan precursor phospho-MurNAc-pentapeptide from UDP-MurNAc-pentapeptide onto the lipid carrier undecaprenyl phosphate, yielding undecaprenyl-pyrophosphoryl-MurNAc-pentapeptide, known as lipid I. The polypeptide is Phospho-N-acetylmuramoyl-pentapeptide-transferase (Teredinibacter turnerae (strain ATCC 39867 / T7901)).